The sequence spans 228 residues: Ribose-5-phosphate isomerase A (228 aa).

Residues T28–T31, D84–D87, and K97–G100 contribute to the substrate site. The active-site Proton acceptor is the E106. K124 is a substrate binding site.

The protein belongs to the ribose 5-phosphate isomerase family. Homodimer.

The catalysed reaction is aldehydo-D-ribose 5-phosphate = D-ribulose 5-phosphate. It functions in the pathway carbohydrate degradation; pentose phosphate pathway; D-ribose 5-phosphate from D-ribulose 5-phosphate (non-oxidative stage): step 1/1. Catalyzes the reversible conversion of ribose-5-phosphate to ribulose 5-phosphate. In Levilactobacillus brevis (strain ATCC 367 / BCRC 12310 / CIP 105137 / JCM 1170 / LMG 11437 / NCIMB 947 / NCTC 947) (Lactobacillus brevis), this protein is Ribose-5-phosphate isomerase A.